A 140-amino-acid chain; its full sequence is Putative ABC transporter permease protein ORF1 (140 aa).

One can recognise an ABC transmembrane type-1 domain in the interval 1 to 133 (DPNVAFYSVV…ITTAGIFAYF (133 aa)). Helical transmembrane passes span 9–29 (VVAVICWQYIPFYMIFFIAAL), 65–85 (TACILSLIGSLKYFDLIYVMT), and 115–135 (TIASAMFLIITTAGIFAYFVT).

The protein belongs to the binding-protein-dependent transport system permease family. MalFG subfamily.

Its subcellular location is the cell membrane. May play a role in sugar transport. The polypeptide is Putative ABC transporter permease protein ORF1 (Caldicellulosiruptor sp. (strain Rt8B.4)).